The chain runs to 68 residues: Inhibitor of trypsin and hageman factor (68 aa).

Ser1 bears the N-acetylserine mark. A disulfide bridge links Cys3 with Cys48.

The protein belongs to the protease inhibitor I13 (potato type I serine protease inhibitor) family.

Specifically inhibits both trypsin and activated Hageman factor. The chain is Inhibitor of trypsin and hageman factor from Cucurbita maxima (Pumpkin).